A 440-amino-acid chain; its full sequence is Serine/threonine-protein kinase VRK1 (440 aa).

The Protein kinase domain maps to 37-317 (WKLGLPIGQG…LLEYTEKPLY (281 aa)). Residues 43 to 51 (IGQGGFGCI) and lysine 71 contribute to the ATP site. Lysine 71 participates in a covalent cross-link: Glycyl lysine isopeptide (Lys-Gly) (interchain with G-Cter in SUMO2). Aspartate 177 functions as the Proton acceptor in the catalytic mechanism. At serine 342 the chain carries Phosphoserine; by PLK3. Phosphoserine is present on serine 376. A Phosphothreonine modification is found at threonine 378. 2 stretches are compositionally biased toward polar residues: residues 379–391 (QVQE…SVES) and 398–410 (SMSQ…SSSD). A disordered region spans residues 379 to 440 (QVQEAAQTRS…GSRTRKKAQK (62 aa)). The interval 387–393 (RSVESQG) is required for interaction with the nucleosome.

This sequence belongs to the protein kinase superfamily. CK1 Ser/Thr protein kinase family. VRK subfamily. Interacts with HDAC1, KAT2B, SETDB1, KDM3A and KDM4A. Associates with the nucleosome through interactions with nucleosome DNA, histone H2A and histone H2B; the interaction with H2A and H2B is mediated by the nucleosome acidic patch, a cluster of negatively charged residues of H2A and H2B forming a cleft within the nucleosome core. Autophosphorylated at various serine and threonine residues. Autophosphorylation does not impair its ability to phosphorylate p53/TP53. Phosphorylation by PLK3 leads to induction of Golgi fragmentation during mitosis. In terms of tissue distribution, highly expressed in testis. Expressed in liver, kidney and muscle. Weakly expressed in thymus, bone marrow and spleen.

The protein localises to the nucleus. It localises to the cytoplasm. Its subcellular location is the cajal body. The enzyme catalyses L-seryl-[protein] + ATP = O-phospho-L-seryl-[protein] + ADP + H(+). The catalysed reaction is L-threonyl-[protein] + ATP = O-phospho-L-threonyl-[protein] + ADP + H(+). With respect to regulation, active in presence of Mn(2+), Mg(2+) and Zn(2+), but is not functional with Ca(2+) or Cu(2+). Has a higher affinity for Mn(2+) than for Mg(2+). RAN inhibits its autophosphorylation and its ability to phosphorylate histone H3. Functionally, serine/threonine kinase involved in the regulation of key cellular processes including the cell cycle, nuclear condensation, transcription regulation, and DNA damage response. Controls chromatin organization and remodeling by mediating phosphorylation of histone H3 on 'Thr-4' and histone H2AX (H2aXT4ph). It also phosphorylates KAT5 in response to DNA damage, promoting KAT5 association with chromatin and histone acetyltransferase activity. Is involved in the regulation of cell cycle progression of neural progenitors, and is required for proper cortical neuronal migration. Is involved in neurite elongation and branching in motor neurons, and has an essential role in Cajal bodies assembly, acting through COIL phosphorylation and the control of coilin degradation. Involved in Golgi disassembly during the cell cycle: following phosphorylation by PLK3 during mitosis, required to induce Golgi fragmentation. Phosphorylates BANF1: disrupts its ability to bind DNA, reduces its binding to LEM domain-containing proteins and causes its relocalization from the nucleus to the cytoplasm. Phosphorylates TP53BP1 and p53/TP53 on 'Thr-18', preventing the interaction between p53/TP53 and MDM2. Phosphorylates ATF2 which activates its transcriptional activity. Phosphorylates JUN. The protein is Serine/threonine-protein kinase VRK1 of Mus musculus (Mouse).